We begin with the raw amino-acid sequence, 395 residues long: Acetate kinase (395 aa).

Asn8 is a binding site for Mg(2+). Lys15 lines the ATP pocket. Arg89 provides a ligand contact to substrate. Asp146 acts as the Proton donor/acceptor in catalysis. Residues 206 to 210, 281 to 283, and 329 to 333 contribute to the ATP site; these read HLGNG, DLR, and GIGEN. Glu382 contributes to the Mg(2+) binding site.

The protein belongs to the acetokinase family. In terms of assembly, homodimer. It depends on Mg(2+) as a cofactor. Requires Mn(2+) as cofactor.

The protein resides in the cytoplasm. The catalysed reaction is acetate + ATP = acetyl phosphate + ADP. It participates in metabolic intermediate biosynthesis; acetyl-CoA biosynthesis; acetyl-CoA from acetate: step 1/2. With respect to regulation, induced by glucose excess, the induction may be mediated by CcpA transcriptional regulator. In terms of biological role, catalyzes the formation of acetyl phosphate from acetate and ATP. Can also catalyze the reverse reaction. Appears to favor the formation of acetate. Involved in the secretion of excess carbohydrate. The sequence is that of Acetate kinase from Bacillus subtilis (strain 168).